The chain runs to 291 residues: Undecaprenyl-diphosphatase (291 aa).

Transmembrane regions (helical) follow at residues 1–21 (MIIIEFIKGLILGIVEGLTEF), 48–68 (SAFTFKVVIQLGSVFAAAWVF), 100–120 (LHVLVGMIPAGILGVLFDDFI), 124–144 (LFSVPTVMIGLFLGAIYMIIA), 160–180 (INYVQAFVIGISQAVAMWPGF), 201–221 (SDFTFIMAVPIMLAASALSLV), 230–250 (AHIPFYLIGFLAAFIVGLIAI), and 270–290 (IVLVIIIAILYFGFGIGQGIS).

It belongs to the UppP family.

The protein resides in the cell membrane. It carries out the reaction di-trans,octa-cis-undecaprenyl diphosphate + H2O = di-trans,octa-cis-undecaprenyl phosphate + phosphate + H(+). Functionally, catalyzes the dephosphorylation of undecaprenyl diphosphate (UPP). Confers resistance to bacitracin. In Staphylococcus haemolyticus (strain JCSC1435), this protein is Undecaprenyl-diphosphatase.